Consider the following 112-residue polypeptide: MKKIEAIIKPFKLDEVKEALQEAGLQGITVTEAKGFGRQKGHTELYRGAEYVVDFLPKVKIEVVLGDDAVEGAIEAIRKAAQTGRIGDGKIFVSNIEEVVRIRTGETGMDAV.

An O-UMP-tyrosine modification is found at Y51.

It belongs to the P(II) protein family. As to quaternary structure, homotrimer.

Its function is as follows. In nitrogen-limiting conditions, when the ratio of Gln to 2-ketoglutarate decreases, P-II is uridylylated to P-II-UMP. P-II-UMP allows the deadenylation of glutamine synthetase (GS), thus activating the enzyme. Conversely, in nitrogen excess P-II is deuridylated and promotes the adenylation of GS. P-II indirectly controls the transcription of the GS gene (glnA). P-II prevents NR-II-catalyzed conversion of NR-I to NR-I-phosphate, the transcriptional activator of glnA. When P-II is uridylylated to P-II-UMP, these events are reversed. This is Nitrogen regulatory protein P-II (glnB) from Mesorhizobium japonicum (strain LMG 29417 / CECT 9101 / MAFF 303099) (Mesorhizobium loti (strain MAFF 303099)).